The chain runs to 580 residues: Cleavage stimulation factor subunit 2 (580 aa).

Position 14 is a phosphoserine (Ser14). One can recognise an RRM domain in the interval 16–94 (RSVFVGNIPY…RALRVDNAAS (79 aa)). Positions 108–248 (APVIESPYGE…VNGAPPMMQA (141 aa)) are interactions with CSTF3 and SYMPK. Lys189 is covalently cross-linked (Glycyl lysine isopeptide (Lys-Gly) (interchain with G-Cter in SUMO2)). Arg308 carries the omega-N-methylarginine modification. Disordered regions lie at residues 311-331 (LPTN…DPRG) and 347-414 (LGPP…RGLD). Composition is skewed to basic and acidic residues over residues 363-376 (PGHE…HDMR) and 405-414 (RGGRDPRGLD). Residues 413–417 (LDARG) form a 1; approximate repeat. A 12 X 5 AA tandem repeats of M-E-A-R-[AG] region spans residues 413–472 (LDARGMEARAMEARGLDARGLEARAMEARAMEARAMEARAMEARAMEARAMEARGMDTRG). 2 tandem repeats follow at residues 418-422 (MEARA) and 423-427 (MEARG). The stretch at 428–432 (LDARG) is one 4; approximate repeat. One copy of the 5; approximate repeat lies at 433-437 (LEARA). A run of 6 repeats spans residues 438 to 442 (MEARA), 443 to 447 (MEARA), 448 to 452 (MEARA), 453 to 457 (MEARA), 458 to 462 (MEARA), and 463 to 467 (MEARG). A 12; approximate repeat occupies 468–472 (MDTRG). 2 positions are modified to omega-N-methylarginine: Arg471 and Arg478. The segment at 512-536 (MQGASMQGGSQPGGFSPGQSQVTPQ) is disordered. Residues 517–580 (MQGGSQPGGF…EQIQKSTGAP (64 aa)) are interaction with RPO2TC1. 2 positions are modified to phosphoserine: Ser521 and Ser527.

The CSTF complex is composed of CSTF1 (50 kDa subunit), CSTF2 (64 kDa subunit) and CSTF3 (77 kDa subunit). CSTF2 directly interacts with CSTF3, SYMPK and RPO2TC1. Interacts with HSF1 in heat-stressed cells. Interacts with CPSF2, CPSF3 and FIP1L1. Interacts with DDX1. Expressed in most somatic cell types (at protein level). Highly expressed in testis, except in meiotic spermatocytes.

It localises to the nucleus. In terms of biological role, one of the multiple factors required for polyadenylation and 3'-end cleavage of mammalian pre-mRNAs. This subunit is directly involved in the binding to pre-mRNAs. This is Cleavage stimulation factor subunit 2 (Cstf2) from Mus musculus (Mouse).